A 288-amino-acid polypeptide reads, in one-letter code: MSSRKQASQTRGQQSAEEDNFKKPTRSNMQRSKMRGAASGKKSAGSQPKNLDPALPGRWGGRSAENPPSGSVRKTRKNKQKAPGNGDGGSTSEVPQPPRKKRARADPTVESEEAFKSRMEVKVKIPEELKPWLVEDWDLVTRQKQLFQLPAKKNVDAILEEYANCKKSQGNVDNKEYAVNEVVGGIKEYFNVMLGTQLLYKFERPQYAEILLAHPDAPMSQIYGAPHLLRLFVRIGAMLAYTPLDEKSLALLLGYLHDFLKYLAKNSASLFTASDYKVASADYHRKAL.

The segment covering 1–15 (MSSRKQASQTRGQQS) has biased composition (polar residues). Residues 1-115 (MSSRKQASQT…DPTVESEEAF (115 aa)) form a disordered region. Ser71 is subject to Phosphoserine. The MRG domain occupies 117-288 (SRMEVKVKIP…ASADYHRKAL (172 aa)).

As to quaternary structure, component of the NuA4 histone acetyltransferase complex which contains the catalytic subunit KAT5/TIP60 and the subunits EP400, TRRAP/PAF400, BRD8/SMAP, EPC1, DMAP1/DNMAP1, RUVBL1/TIP49, RUVBL2, ING3, actin, ACTL6A/BAF53A, MORF4L1/MRG15, MORF4L2/MRGX, MRGBP, YEATS4/GAS41 and VPS72/YL1. The NuA4 complex interacts with MYC and the adenovirus E1A protein. MORF4L1 may also participate in the formation of NuA4 related complexes which lack the KAT5/TIP60 catalytic subunit, but which include the SWI/SNF related protein SRCAP. Component of the MSIN3A histone deacetylase complex, which includes SIN3A, HDAC2, ARID4B, MORF4L1, RBBP4/RbAp48, and RBBP7/RbAp46. Interacts with MRFAP1 and RB1. May also interact with one or more as yet undefined members of the TLE (transducin-like enhancer of split) family of transcriptional repressors.

It localises to the nucleus. Component of the NuA4 histone acetyltransferase complex which is involved in transcriptional activation of select genes principally by acetylation of nucleosomal histone H4 and H2A. This modification may both alter nucleosome - DNA interactions and promote interaction of the modified histones with other proteins which positively regulate transcription. This complex may be required for the activation of transcriptional programs associated with oncogene and proto-oncogene mediated growth induction, tumor suppressor mediated growth arrest and replicative senescence, apoptosis, and DNA repair. The NuA4 complex ATPase and helicase activities seem to be, at least in part, contributed by the association of RUVBL1 and RUVBL2 with EP400. NuA4 may also play a direct role in DNA repair when directly recruited to sites of DNA damage. Also a component of the MSIN3A complex which acts to repress transcription by deacetylation of nucleosomal histones. In Mus musculus (Mouse), this protein is Mortality factor 4-like protein 2 (Morf4l2).